The primary structure comprises 297 residues: Glucose-6-phosphate 1-epimerase (297 aa).

The substrate site is built by Arg57, Gln81, and Arg86. Ser88 carries the phosphoserine modification. Residue His159 is part of the active site. Asp203 is a substrate binding site. Glu264 is a catalytic residue.

It belongs to the glucose-6-phosphate 1-epimerase family.

The catalysed reaction is alpha-D-glucose 6-phosphate = beta-D-glucose 6-phosphate. Catalyzes the interconversion between the alpha and beta anomers from at least three hexose 6-phosphate sugars (Glc6P, Gal6P, and Man6P). The polypeptide is Glucose-6-phosphate 1-epimerase (Saccharomyces cerevisiae (strain ATCC 204508 / S288c) (Baker's yeast)).